Reading from the N-terminus, the 1086-residue chain is Calcium-transporting ATPase 9, plasma membrane-type (1086 aa).

Residues 1–15 (MSTSSSNGLLLTSMS) are compositionally biased toward low complexity. The disordered stretch occupies residues 1–50 (MSTSSSNGLLLTSMSGRHDDMEAGSAKTEEHSDHEELQHDPDDPFDIDNT). Residues 1–194 (MSTSSSNGLL…NTYPKKKGKN (194 aa)) are Cytoplasmic-facing. Positions 16–42 (GRHDDMEAGSAKTEEHSDHEELQHDPD) are enriched in basic and acidic residues. Residues 57 to 68 (SLRRWRQAALVL) form an interaction with calmodulin region. The helical transmembrane segment at 195–215 (FFMFLWEAWQDLTLIILIIAA) threads the bilayer. Topologically, residues 216–233 (VTSLALGIKTEGLKEGWL) are lumenal. Residues 234–254 (DGGSIAFAVLLVIVVTAVSDY) form a helical membrane-spanning segment. The Cytoplasmic segment spans residues 255–382 (RQSLQFQNLN…GEETPLQVRL (128 aa)). The helical transmembrane segment at 383–402 (NGLATFIGIVGLSVALVVLV) threads the bilayer. Over 403–439 (ALLVRYFTGTTQDTNGATQFIKGTTSISDIVDDCVKI) the chain is Lumenal. A helical membrane pass occupies residues 440 to 457 (FTIAVTIVVVAVPEGLPL). The Cytoplasmic segment spans residues 458 to 857 (AVTLTLAYSM…RWGRSVYANI (400 aa)). Aspartate 495 serves as the catalytic 4-aspartylphosphate intermediate. Mg(2+) is bound by residues aspartate 802 and aspartate 806. The chain crosses the membrane as a helical span at residues 858–876 (QKFIQFQLTVNVAALIINV). The Lumenal portion of the chain corresponds to 877 to 887 (VAAMSSGDVPL). A helical membrane pass occupies residues 888–908 (KAVQLLWVNLIMDTLGALALA). The Cytoplasmic portion of the chain corresponds to 909 to 928 (TEPPTDHLMHRTPVGRREPL). Residues 929–951 (ITNIMWRNLLVQSFYQVAVLLVL) traverse the membrane as a helical segment. Residues 952–963 (NFAGLSILGLNH) are Lumenal-facing. Residues 964 to 988 (ENHAHAVEVKNTMIFNAFVMCQIFN) form a helical membrane-spanning segment. The Cytoplasmic portion of the chain corresponds to 989-1006 (EFNARKPDEMNVFRGVNK). The chain crosses the membrane as a helical span at residues 1007–1028 (NPLFVAIVGVTFILQIIIVTFL). The Lumenal segment spans residues 1029 to 1038 (GKFAHTVRLG). A helical membrane pass occupies residues 1039-1060 (WQLWLASIIIGLVSWPLAIVGK). Residues 1061–1086 (LIPVPKTPMSVYFKKPFRKYKASRNA) are Cytoplasmic-facing.

This sequence belongs to the cation transport ATPase (P-type) (TC 3.A.3) family. Type IIB subfamily.

It localises to the membrane. It catalyses the reaction Ca(2+)(in) + ATP + H2O = Ca(2+)(out) + ADP + phosphate + H(+). Activated by calmodulin. In terms of biological role, this magnesium-dependent enzyme catalyzes the hydrolysis of ATP coupled with the translocation of calcium from the cytosol out of the cell or into organelles. The chain is Calcium-transporting ATPase 9, plasma membrane-type (ACA9) from Arabidopsis thaliana (Mouse-ear cress).